The primary structure comprises 795 residues: uncharacterized protein (795 aa).

Positions 228–280 (NIICFKNKCKNNEKEKKEEEEDHDHDHDDKKKEKEDKEKEEEEEEEDSNDDFE) form a coiled coil. Disordered stretches follow at residues 242 to 278 (EKKE…SNDD), 326 to 430 (TTTT…TPNR), 455 to 484 (INQQ…KSEP), and 673 to 743 (NNNN…NENE). A compositionally biased stretch (basic and acidic residues) spans 251 to 264 (DHDHDDKKKEKEDK). The segment covering 265–278 (EKEEEEEEEDSNDD) has biased composition (acidic residues). A compositionally biased stretch (low complexity) spans 326–345 (TTTTTVNGSKNSSNTTTPIT). Over residues 362 to 373 (DDDDDDDLTDED) the composition is skewed to acidic residues. Residues 377 to 398 (HNEIYSTSPKVSHSTFCQSSPT) are compositionally biased toward polar residues. 3 stretches are compositionally biased toward low complexity: residues 399 to 414 (LLDL…QQQQ), 455 to 480 (INQQ…SSNI), and 673 to 729 (NNNN…NQNE). The segment covering 732-743 (NENKNENENENE) has biased composition (basic and acidic residues).

This is an uncharacterized protein from Dictyostelium discoideum (Social amoeba).